A 191-amino-acid polypeptide reads, in one-letter code: ATP-dependent dethiobiotin synthetase BioD 2 (191 aa).

13 to 18 (DVGKTI) lines the ATP pocket. Residue Thr-17 coordinates Mg(2+). Lys-38 is a catalytic residue. Thr-42 provides a ligand contact to substrate. Residues Asp-50 and 115-118 (EGAG) each bind ATP. Residues Asp-50 and Glu-115 each contribute to the Mg(2+) site.

Belongs to the dethiobiotin synthetase family. As to quaternary structure, homodimer. The cofactor is Mg(2+).

The protein resides in the cytoplasm. The enzyme catalyses (7R,8S)-7,8-diammoniononanoate + CO2 + ATP = (4R,5S)-dethiobiotin + ADP + phosphate + 3 H(+). It functions in the pathway cofactor biosynthesis; biotin biosynthesis; biotin from 7,8-diaminononanoate: step 1/2. Catalyzes a mechanistically unusual reaction, the ATP-dependent insertion of CO2 between the N7 and N8 nitrogen atoms of 7,8-diaminopelargonic acid (DAPA, also called 7,8-diammoniononanoate) to form a ureido ring. In Haemophilus influenzae (strain ATCC 51907 / DSM 11121 / KW20 / Rd), this protein is ATP-dependent dethiobiotin synthetase BioD 2.